Reading from the N-terminus, the 239-residue chain is Tetraspanin-9 (239 aa).

Topologically, residues 1 to 13 (MARGCLCCVKYMM) are cytoplasmic. The helical transmembrane segment at 14 to 34 (FLFNLLFWLSGCGLLGVGIWL) threads the bilayer. The Extracellular segment spans residues 35–55 (SVSQGSFATFSPSFPSLSAAN). Residues 56–76 (LVITLGSVVMVTGFLGCLGAI) traverse the membrane as a helical segment. Topologically, residues 77-85 (KENKCLLLS) are cytoplasmic. Residues 86-106 (FFIVLLIILLAELILLILFFV) form a helical membrane-spanning segment. Topologically, residues 107–203 (YTEKVSENAK…VEEWLNDNKH (97 aa)) are extracellular. N-linked (GlcNAc...) asparagine glycosylation occurs at N180. The helical transmembrane segment at 204-224 (LLGTIAMCVLVLQLLGMAFSM) threads the bilayer. At 225-239 (TLYQQIHRAGKKYDA) the chain is on the cytoplasmic side.

This sequence belongs to the tetraspanin (TM4SF) family.

It is found in the membrane. This chain is Tetraspanin-9 (tspan9), found in Danio rerio (Zebrafish).